The sequence spans 339 residues: Centromere protein N (339 aa).

Phosphoserine is present on residues S226, S235, and S282.

It belongs to the CENP-N/CHL4 family. In terms of assembly, component of the CENPA-NAC complex, at least composed of CENPA, CENPC, CENPH, CENPM, CENPN, CENPT and CENPU. The CENPA-NAC complex interacts with the CENPA-CAD complex, composed of CENPI, CENPK, CENPL, CENPO, CENPP, CENPQ, CENPR and CENPS. Interacts directly with CENPA. Identified in a centromere complex containing histones H2A, H2B and H4, and at least CENPA, CENPB, CENPC, CENPT, CENPN, HJURP, SUPT16H, SSRP1 and RSF1.

The protein resides in the nucleus. It localises to the chromosome. The protein localises to the centromere. It is found in the kinetochore. In terms of biological role, component of the CENPA-NAC (nucleosome-associated) complex, a complex that plays a central role in assembly of kinetochore proteins, mitotic progression and chromosome segregation. The CENPA-NAC complex recruits the CENPA-CAD (nucleosome distal) complex and may be involved in incorporation of newly synthesized CENPA into centromeres. CENPN is the first protein to bind specifically to CENPA nucleosomes and the direct binding of CENPA nucleosomes by CENPN is required for centromere assembly. Required for chromosome congression and efficiently align the chromosomes on a metaphase plate. The chain is Centromere protein N (CENPN) from Homo sapiens (Human).